We begin with the raw amino-acid sequence, 99 residues long: Nucleoid-associated protein EbfC (99 aa).

It belongs to the YbaB/EbfC family. Homodimer. Can form tetramers and octamers in solution.

Its subcellular location is the cytoplasm. It localises to the nucleoid. Its function is as follows. Binds to DNA and alters its conformation. May be involved in global regulation of gene expression. Binds specifically and non-specifically to DNA, preferentially to the 4 bp broken palindrome 5'-GTnAC-3'. Affects expression of a wide variety of genes, encoding both structural and metabolic proteins. The chain is Nucleoid-associated protein EbfC from Borreliella burgdorferi (strain ATCC 35210 / DSM 4680 / CIP 102532 / B31) (Borrelia burgdorferi).